A 161-amino-acid polypeptide reads, in one-letter code: Endoribonuclease YbeY (161 aa).

The Zn(2+) site is built by His-120, His-124, and Asp-130.

Belongs to the endoribonuclease YbeY family. Requires Zn(2+) as cofactor.

The protein localises to the cytoplasm. In terms of biological role, single strand-specific metallo-endoribonuclease involved in late-stage 70S ribosome quality control and in maturation of the 3' terminus of the 16S rRNA. This is Endoribonuclease YbeY from Chlamydia trachomatis serovar L2 (strain ATCC VR-902B / DSM 19102 / 434/Bu).